A 216-amino-acid polypeptide reads, in one-letter code: Calcium-binding protein 2 (216 aa).

Residues 1 to 41 are disordered; that stretch reads MGNCAKTPWHRGSKERWQWPGSPLGGSRPSPGPRTEEQEGT. The N-myristoyl glycine moiety is linked to residue Gly-2. Low complexity predominate over residues 20-29; that stretch reads PGSPLGGSRP. EF-hand domains lie at 74–109, 125–142, 148–183, and 185–216; these read EEIE…LGYM, GKVD…KLLA, IGVR…LLGE, and LSQR…MMSR. Ca(2+) contacts are provided by Asp-87, Asp-89, Asp-91, Tyr-93, and Glu-98. Residues Asp-161, Asn-163, Asp-165, Cys-167, Glu-172, Asp-198, Asn-200, Asp-202, and Glu-209 each contribute to the Ca(2+) site.

Expressed in the inner hair cells (IHCs), outer hair cells,(OHCs) and vestibular hair cells within the ear and in the retina (at protein level). Expressed in the retinal cone type 6 ON-bipolar cells and type 1 OFF-bipolar cells (at protein level). Expressed in the organ of Corti and spiral ganglion neurons in the cochlea (at protein level).

It is found in the cytoplasm. The protein localises to the perinuclear region. Its subcellular location is the cell membrane. The protein resides in the golgi apparatus. Its function is as follows. Required for sound encoding at inner hair cells (IHCs) synapses, likely via inhibition of the inactivation of voltage-gated calcium channel of type 1.3 (Cav1.3) in the IHCs. Required for the normal transfer of light signals through the retina. The sequence is that of Calcium-binding protein 2 (Cabp2) from Mus musculus (Mouse).